The sequence spans 237 residues: Uridylate kinase (237 aa).

9–12 (KLSG) provides a ligand contact to ATP. Glycine 51 serves as a coordination point for UMP. ATP contacts are provided by glycine 52 and arginine 56. Residues aspartate 71 and 132–139 (CGNPFFTT) each bind UMP. Positions 159, 165, and 168 each coordinate ATP.

This sequence belongs to the UMP kinase family. Homohexamer.

Its subcellular location is the cytoplasm. The catalysed reaction is UMP + ATP = UDP + ADP. It functions in the pathway pyrimidine metabolism; CTP biosynthesis via de novo pathway; UDP from UMP (UMPK route): step 1/1. With respect to regulation, inhibited by UTP. In terms of biological role, catalyzes the reversible phosphorylation of UMP to UDP. The protein is Uridylate kinase of Prochlorococcus marinus (strain MIT 9303).